Here is a 276-residue protein sequence, read N- to C-terminus: Ribosomal RNA small subunit methyltransferase A (276 aa).

The S-adenosyl-L-methionine site is built by asparagine 16, leucine 18, glycine 43, glutamate 64, aspartate 89, and asparagine 109.

Belongs to the class I-like SAM-binding methyltransferase superfamily. rRNA adenine N(6)-methyltransferase family. RsmA subfamily.

The protein localises to the cytoplasm. It catalyses the reaction adenosine(1518)/adenosine(1519) in 16S rRNA + 4 S-adenosyl-L-methionine = N(6)-dimethyladenosine(1518)/N(6)-dimethyladenosine(1519) in 16S rRNA + 4 S-adenosyl-L-homocysteine + 4 H(+). Specifically dimethylates two adjacent adenosines (A1518 and A1519) in the loop of a conserved hairpin near the 3'-end of 16S rRNA in the 30S particle. May play a critical role in biogenesis of 30S subunits. The protein is Ribosomal RNA small subunit methyltransferase A of Marinobacter nauticus (strain ATCC 700491 / DSM 11845 / VT8) (Marinobacter aquaeolei).